A 115-amino-acid chain; its full sequence is NAD(P)H-quinone oxidoreductase subunit M (115 aa).

The protein belongs to the complex I NdhM subunit family. As to quaternary structure, NDH-1 can be composed of about 15 different subunits; different subcomplexes with different compositions have been identified which probably have different functions.

Its subcellular location is the cellular thylakoid membrane. It carries out the reaction a plastoquinone + NADH + (n+1) H(+)(in) = a plastoquinol + NAD(+) + n H(+)(out). The enzyme catalyses a plastoquinone + NADPH + (n+1) H(+)(in) = a plastoquinol + NADP(+) + n H(+)(out). In terms of biological role, NDH-1 shuttles electrons from an unknown electron donor, via FMN and iron-sulfur (Fe-S) centers, to quinones in the respiratory and/or the photosynthetic chain. The immediate electron acceptor for the enzyme in this species is believed to be plastoquinone. Couples the redox reaction to proton translocation, and thus conserves the redox energy in a proton gradient. Cyanobacterial NDH-1 also plays a role in inorganic carbon-concentration. The polypeptide is NAD(P)H-quinone oxidoreductase subunit M (Prochlorococcus marinus (strain SARG / CCMP1375 / SS120)).